The primary structure comprises 106 residues: Iron-sulfur cluster assembly protein CyaY (106 aa).

Belongs to the frataxin family. In terms of assembly, interacts with IscS. Certain pairs of proteins can bind simultaneously to IscS; IscS-IscU-CyaY complexes can be isolated in vitro, but (IscS-TusA-CyaY) complexes cannot.

Its function is as follows. Involved in iron-sulfur (Fe-S) cluster assembly. May act as a regulator of Fe-S biogenesis. The sequence is that of Iron-sulfur cluster assembly protein CyaY from Escherichia coli O157:H7.